Consider the following 347-residue polypeptide: Chlorophyllase type 0 (347 aa).

An N-terminal signal peptide occupies residues 1 to 19 (MAKLLLLIFGVFIFVNSQA). A propeptide spanning residues 20–30 (QTFPTILEKHN) is cleaved from the precursor. A GXSXG motif is present at residues 160 to 164 (GHSRG). Catalysis depends on serine 162, which acts as the Nucleophile. The Charge relay system role is filled by aspartate 191. Residues asparagine 215, asparagine 229, and asparagine 251 are each glycosylated (N-linked (GlcNAc...) asparagine). The active-site Charge relay system is the histidine 262. N-linked (GlcNAc...) asparagine glycosylation occurs at asparagine 321.

The protein belongs to the AB hydrolase superfamily. Lipase family.

It carries out the reaction a chlorophyll + H2O = a chlorophyllide + phytol + H(+). It catalyses the reaction chlorophyll a + H2O = phytol + chlorophyllide a + H(+). Its pathway is porphyrin-containing compound metabolism; chlorophyll degradation. With respect to regulation, inhibited by diisopropyl fluorophosphate (DFP), phenylmethanesulfonyl fluoride (PMSF) or p-chloromercuribenzoic acid (PCMB), but not by N-ethylmaleimide (NEM) or iodoacetamide. Functionally, catalyzes the hydrolysis of ester bond in chlorophyll to yield chlorophyllide and phytol. This chain is Chlorophyllase type 0, found in Chenopodium album (Fat hen).